A 347-amino-acid chain; its full sequence is Pre-B-cell leukemia transcription factor 1 (347 aa).

The disordered stretch occupies residues 1–40; that stretch reads MDDQPRLMHSHPGVGMAGHPSLSQHMQDGTGANEGEGGRK. The PBC domain maps to 38-232; the sequence is GRKQDIGDIL…VMILRSRFLD (195 aa). Residues 45 to 124 form a PBC-A region; that stretch reads DILQQIMTIT…EGVAGPEKGG (80 aa). The PBC-B stretch occupies residues 127–232; sequence AAAAAAAAAS…VMILRSRFLD (106 aa). Positions 233–295 form a DNA-binding region, homeobox; TALE-type; the sequence is ARRKRRNFNK…NKRIRYKKNI (63 aa). Residues 318–331 are compositionally biased toward polar residues; that stretch reads VHGSQANSPSTPSS. The tract at residues 318–347 is disordered; the sequence is VHGSQANSPSTPSSAGGYPSPCYQSDRRIQ.

It belongs to the TALE/PBX homeobox family. In terms of assembly, forms a heterodimer with meis1; the interaction is necessary for neural fate induction.

The protein localises to the nucleus. Its function is as follows. Acts as a transcriptional activator in complex with isoform 2 of meis1, to induce posterior neural and neural crest gene expression, and thereby specify hindbrain and neural crest cell fate. Binds to a highly conserved region in the promoter of the neural crest gene zic3. Required for the nuclear transport or retention of meis1. This Xenopus tropicalis (Western clawed frog) protein is Pre-B-cell leukemia transcription factor 1.